The sequence spans 142 residues: Ribosome maturation factor RimP (142 aa).

It belongs to the RimP family.

It localises to the cytoplasm. Required for maturation of 30S ribosomal subunits. The chain is Ribosome maturation factor RimP from Wolinella succinogenes (strain ATCC 29543 / DSM 1740 / CCUG 13145 / JCM 31913 / LMG 7466 / NCTC 11488 / FDC 602W) (Vibrio succinogenes).